We begin with the raw amino-acid sequence, 257 residues long: Putative hydro-lyase BceJ2315_40370 (257 aa).

Belongs to the D-glutamate cyclase family.

The chain is Putative hydro-lyase BceJ2315_40370 from Burkholderia cenocepacia (strain ATCC BAA-245 / DSM 16553 / LMG 16656 / NCTC 13227 / J2315 / CF5610) (Burkholderia cepacia (strain J2315)).